The sequence spans 170 residues: Regulator of ribonuclease activity A (170 aa).

This sequence belongs to the RraA family. Homotrimer. Binds to both RNA-binding sites in the C-terminal region of Rne and to RhlB.

It localises to the cytoplasm. In terms of biological role, globally modulates RNA abundance by binding to RNase E (Rne) and regulating its endonucleolytic activity. Can modulate Rne action in a substrate-dependent manner by altering the composition of the degradosome. Modulates RNA-binding and helicase activities of the degradosome. This chain is Regulator of ribonuclease activity A, found in Psychromonas ingrahamii (strain DSM 17664 / CCUG 51855 / 37).